Consider the following 109-residue polypeptide: Resistin (109 aa).

A signal peptide spans 1–18 (MKALSFLFIPVLGLLVCG). Cystine bridges form between Cys-51–Cys-104, Cys-63–Cys-103, Cys-72–Cys-89, Cys-74–Cys-91, and Cys-78–Cys-93.

The protein belongs to the resistin/FIZZ family. Homodimer; disulfide-linked.

Its subcellular location is the secreted. Its function is as follows. Hormone that seems to suppress insulin ability to stimulate glucose uptake into adipose cells. Potentially links obesity to diabetes. This chain is Resistin (RETN), found in Bos taurus (Bovine).